A 182-amino-acid chain; its full sequence is Cell wall protein phiA (182 aa).

A signal peptide spans 1 to 18; the sequence is MKLTSTAALASLAVAATA. N-linked (GlcNAc...) asparagine glycosylation is found at Asn-57 and Asn-107.

The protein belongs to the phiA family. Mainly present in phialides and conidia.

It is found in the secreted. The protein resides in the cell wall. Cell wall protein involved in development of asexual structures such as phialide and conidium development, and thus required for spore formation. Plays a role as a general stress protectant produced by the fungus in competition with antagonistic bacteria. The chain is Cell wall protein phiA from Emericella nidulans (strain FGSC A4 / ATCC 38163 / CBS 112.46 / NRRL 194 / M139) (Aspergillus nidulans).